Reading from the N-terminus, the 653-residue chain is Large subunit GTPase 1 homolog (653 aa).

The disordered stretch occupies residues 1 to 31; sequence MGRRRAPAGGSLGRALMRHQTQRSRSHRHTD. The span at 16–28 shows a compositional bias: basic residues; sequence LMRHQTQRSRSHR. Phosphoserine is present on residues Ser93 and Ser97. Residues 164–445 form the CP-type G domain; that stretch reads WRQLWRVIER…LCDCPGLVMP (282 aa). GTP is bound at residue 212 to 215; that stretch reads NKAD. The interval 251-358 is disordered; that stretch reads DSEEEANKDD…RKTPQKRQLH (108 aa). Phosphoserine is present on Ser252. Residues 258 to 288 show a composition bias toward basic and acidic residues; sequence KDDRQSNTAEFEHSSFDEAEISHSETEHLPA. Positions 299–333 are enriched in acidic residues; that stretch reads TTDEDDSEYEDCPEEEEDDWQTCSEEDGPEEEDCG. GTP is bound by residues 394-401 and 438-441; these read GYPNVGKS and DCPG. A disordered region spans residues 630–653; the sequence is SENGAGKPWKKHGNRNKKEKSCRL. Residues 637–647 show a composition bias toward basic residues; sequence PWKKHGNRNKK.

It belongs to the TRAFAC class YlqF/YawG GTPase family. LSG1 subfamily.

The protein resides in the cytoplasm. It localises to the endoplasmic reticulum. Its subcellular location is the nucleus. It is found in the cajal body. It carries out the reaction GTP + H2O = GDP + phosphate + H(+). Functionally, functions as a GTPase. May act by mediating the release of NMD3 from the 60S ribosomal subunit after export into the cytoplasm during the 60S ribosomal subunit maturation. The polypeptide is Large subunit GTPase 1 homolog (Macaca fascicularis (Crab-eating macaque)).